Reading from the N-terminus, the 495-residue chain is Leucine aminopeptidase 2 (495 aa).

The signal sequence occupies residues 1–21 (MKSQLLSLAVAVTTISQGVVG). Residues 124-218 (PPASKIMAEL…EDGKNLATLV (95 aa)) enclose the PA domain. Residues Asn-142 and Asn-235 are each glycosylated (N-linked (GlcNAc...) asparagine). Residues His-259 and Asp-271 each contribute to the Zn(2+) site. Asn-272 is a glycosylation site (N-linked (GlcNAc...) asparagine). Catalysis depends on Glu-303, which acts as the Proton acceptor. Zn(2+)-binding residues include Glu-304 and Asp-332. Asn-352 carries an N-linked (GlcNAc...) asparagine glycan. His-430 serves as a coordination point for Zn(2+).

It belongs to the peptidase M28 family. M28A subfamily. In terms of assembly, monomer. Zn(2+) is required as a cofactor.

It is found in the secreted. With respect to regulation, activity is inhibited by EDTA, o-phenanthroline, bestatin and amastatin. Its function is as follows. Extracellular aminopeptidase that releases a wide variety of amino acids from natural peptides and contributes to pathogenicity. The polypeptide is Leucine aminopeptidase 2 (LAP2) (Trichophyton rubrum (Athlete's foot fungus)).